We begin with the raw amino-acid sequence, 214 residues long: Ribonuclease HII (214 aa).

An RNase H type-2 domain is found at 26–214 (EIVCGVDEAG…PVREAFDLIR (189 aa)). Residues Asp32, Glu33, and Asp124 each coordinate a divalent metal cation.

Belongs to the RNase HII family. Mn(2+) serves as cofactor. Requires Mg(2+) as cofactor.

The protein localises to the cytoplasm. The enzyme catalyses Endonucleolytic cleavage to 5'-phosphomonoester.. Its function is as follows. Endonuclease that specifically degrades the RNA of RNA-DNA hybrids. This is Ribonuclease HII from Burkholderia pseudomallei (strain 668).